Reading from the N-terminus, the 286-residue chain is MLRRGLLSFFMVILIDRGTSQLYSSDMCNWKGSGLTHEGHTKDVEQVYLRCSEGSVEWLYPTGAMVINLRPNTLTSAYKHLTVCIKPFKDSKGANIYSEKTGELKLVVPDGENNPHKVYCFGLDRGGLYIEATPQQDISRKITGFQYELISQRTLSDLHTVSDPCRPCSDTEVLLAVCISDFVVKGTISAVTNDEELQESLINVTVDKLYRQKSKIFLPKDNGGWEGMIRTPLECGVKTGMGSFLFTGRMHFGEPRLGCTPRYKDFKRIYLEAKKQGLNPCEISTD.

Positions 1 to 20 (MLRRGLLSFFMVILIDRGTS) are cleaved as a signal peptide. 5 disulfides stabilise this stretch: Cys-28/Cys-51, Cys-84/Cys-120, Cys-165/Cys-235, Cys-168/Cys-259, and Cys-178/Cys-281. A glycan (N-linked (GlcNAc...) asparagine) is linked at Asn-203.

Belongs to the meteorin family.

It localises to the secreted. In terms of biological role, hormone induced following exercise or cold exposure that promotes energy expenditure. Induced either in the skeletal muscle after exercise or in adipose tissue following cold exposure and is present in the circulation. Able to stimulate energy expenditure associated with the browning of the white fat depots and improves glucose tolerance. The chain is Meteorin-like protein (metrnl) from Xenopus laevis (African clawed frog).